A 529-amino-acid polypeptide reads, in one-letter code: Bifunctional purine biosynthesis protein PurH (529 aa).

One can recognise an MGS-like domain in the interval 1-148; the sequence is MQQRRPVRRA…KNHKDVAIVV (148 aa). N6-acetyllysine is present on lysine 287.

It belongs to the PurH family.

The enzyme catalyses (6R)-10-formyltetrahydrofolate + 5-amino-1-(5-phospho-beta-D-ribosyl)imidazole-4-carboxamide = 5-formamido-1-(5-phospho-D-ribosyl)imidazole-4-carboxamide + (6S)-5,6,7,8-tetrahydrofolate. It carries out the reaction IMP + H2O = 5-formamido-1-(5-phospho-D-ribosyl)imidazole-4-carboxamide. The protein operates within purine metabolism; IMP biosynthesis via de novo pathway; 5-formamido-1-(5-phospho-D-ribosyl)imidazole-4-carboxamide from 5-amino-1-(5-phospho-D-ribosyl)imidazole-4-carboxamide (10-formyl THF route): step 1/1. Its pathway is purine metabolism; IMP biosynthesis via de novo pathway; IMP from 5-formamido-1-(5-phospho-D-ribosyl)imidazole-4-carboxamide: step 1/1. This Escherichia coli O9:H4 (strain HS) protein is Bifunctional purine biosynthesis protein PurH.